A 434-amino-acid chain; its full sequence is Glutamyl-tRNA reductase (434 aa).

Substrate-binding positions include 49-52 (TCNR), serine 109, 114-116 (EPQ), and glutamine 120. Cysteine 50 functions as the Nucleophile in the catalytic mechanism. 189 to 194 (GAGEMC) contributes to the NADP(+) binding site.

Belongs to the glutamyl-tRNA reductase family. In terms of assembly, homodimer.

The catalysed reaction is (S)-4-amino-5-oxopentanoate + tRNA(Glu) + NADP(+) = L-glutamyl-tRNA(Glu) + NADPH + H(+). It functions in the pathway porphyrin-containing compound metabolism; protoporphyrin-IX biosynthesis; 5-aminolevulinate from L-glutamyl-tRNA(Glu): step 1/2. Its function is as follows. Catalyzes the NADPH-dependent reduction of glutamyl-tRNA(Glu) to glutamate 1-semialdehyde (GSA). The sequence is that of Glutamyl-tRNA reductase from Geotalea uraniireducens (strain Rf4) (Geobacter uraniireducens).